The sequence spans 321 residues: D-alanine--D-alanine ligase (321 aa).

An ATP-grasp domain is found at 103 to 303; it reads KKILTPENIP…YVALCRMIVE (201 aa). 129-186 is a binding site for ATP; sequence PLPRPYVLKPVNEGSSVGVAIIDESFNDGQPIRKDQIDPWKNFKTLLAEPFIKGRELT. Mg(2+)-binding residues include aspartate 254, glutamate 270, and asparagine 272.

Belongs to the D-alanine--D-alanine ligase family. Requires Mg(2+) as cofactor. It depends on Mn(2+) as a cofactor.

The protein localises to the cytoplasm. It catalyses the reaction 2 D-alanine + ATP = D-alanyl-D-alanine + ADP + phosphate + H(+). It participates in cell wall biogenesis; peptidoglycan biosynthesis. Cell wall formation. In Zymomonas mobilis subsp. mobilis (strain ATCC 31821 / ZM4 / CP4), this protein is D-alanine--D-alanine ligase.